Consider the following 103-residue polypeptide: MYALVEINGKQYKAVEGEFLKIDKISPIEKEKLEFNSVLLINKDGEIKIGKPYVINSSIKCTYKEDKKDKKVVSYRYRRRKSSERKVGHRQTYSYILVDEIVF.

The protein belongs to the bacterial ribosomal protein bL21 family. As to quaternary structure, part of the 50S ribosomal subunit. Contacts protein L20.

This protein binds to 23S rRNA in the presence of protein L20. This Borreliella afzelii (strain PKo) (Borrelia afzelii) protein is Large ribosomal subunit protein bL21.